A 468-amino-acid chain; its full sequence is Inositol polyphosphate 5-phosphatase K (468 aa).

Positions 34–337 (VHVVTWNVAS…SDHKPVTGTF (304 aa)) are catalytic. Residues 318–448 (NYVSHMAYSI…HSVVGISQPF (131 aa)) are required for interaction with GPR78 and PAK1. Positions 340 to 468 (ELNPLMSVPL…DTLYEPEPQI (129 aa)) are required for ruffle localization.

The protein belongs to the inositol 1,4,5-trisphosphate 5-phosphatase type II family. In terms of assembly, interacts with GPR78; necessary for INPP5K localization at the endoplasmic reticulum. Interacts with PAK1; competes with GPR78. As to expression, expressed in the skeletal muscle and the eye.

The protein localises to the endoplasmic reticulum. The protein resides in the cytoplasm. It carries out the reaction 1D-myo-inositol 1,4,5-trisphosphate + H2O = 1D-myo-inositol 1,4-bisphosphate + phosphate. It catalyses the reaction 1,2-dioctanoyl-sn-glycero-3-phospho-(1D-myo-inositol-3,4,5-trisphosphate) + H2O = 1,2-dioctanoyl-sn-glycero-3-phospho-(1D-myo-inositol-3,4-bisphosphate) + phosphate. The catalysed reaction is 1D-myo-inositol 1,3,4,5-tetrakisphosphate + H2O = 1D-myo-inositol 1,3,4-trisphosphate + phosphate. The enzyme catalyses a 1,2-diacyl-sn-glycero-3-phospho-(1D-myo-inositol-4,5-bisphosphate) + H2O = a 1,2-diacyl-sn-glycero-3-phospho-(1D-myo-inositol 4-phosphate) + phosphate. It carries out the reaction a 1,2-diacyl-sn-glycero-3-phospho-(1D-myo-inositol-3,4,5-trisphosphate) + H2O = a 1,2-diacyl-sn-glycero-3-phospho-(1D-myo-inositol-3,4-bisphosphate) + phosphate. Functionally, inositol 5-phosphatase which acts on inositol 1,4,5-trisphosphate, inositol 1,3,4,5-tetrakisphosphate, phosphatidylinositol 4,5-bisphosphate and phosphatidylinositol 3,4,5-trisphosphate. Has 6-fold higher affinity for phosphatidylinositol 4,5-bisphosphate than for inositol 1,4,5-trisphosphate. Negatively regulates assembly of the actin cytoskeleton. Controls insulin-dependent glucose uptake among inositol 3,4,5-trisphosphate phosphatases; therefore, is the specific regulator for insulin signaling in skeletal muscle. The protein is Inositol polyphosphate 5-phosphatase K of Mus musculus (Mouse).